A 330-amino-acid polypeptide reads, in one-letter code: Beta-ketoacyl-[acyl-carrier-protein] synthase III 2 (330 aa).

Active-site residues include cysteine 118 and histidine 246. The tract at residues 247-251 (QANLR) is ACP-binding. The active site involves asparagine 276.

This sequence belongs to the thiolase-like superfamily. FabH family. In terms of assembly, homodimer.

It localises to the cytoplasm. It carries out the reaction malonyl-[ACP] + acetyl-CoA + H(+) = 3-oxobutanoyl-[ACP] + CO2 + CoA. It participates in lipid metabolism; fatty acid biosynthesis. In terms of biological role, catalyzes the condensation reaction of fatty acid synthesis by the addition to an acyl acceptor of two carbons from malonyl-ACP. Catalyzes the first condensation reaction which initiates fatty acid synthesis and may therefore play a role in governing the total rate of fatty acid production. Possesses both acetoacetyl-ACP synthase and acetyl transacylase activities. Its substrate specificity determines the biosynthesis of branched-chain and/or straight-chain of fatty acids. The chain is Beta-ketoacyl-[acyl-carrier-protein] synthase III 2 from Streptomyces coelicolor (strain ATCC BAA-471 / A3(2) / M145).